A 258-amino-acid polypeptide reads, in one-letter code: Leucine-rich repeat-containing protein 3B (258 aa).

An N-terminal signal peptide occupies residues 1–33 (MTPLDLWLSRSIPMCLLLQSLVLMVLCFPSAST). In terms of domain architecture, LRRNT spans 34–68 (CPKGCTCQRSESPPHGLNVTCSLSRLKEIPPDVPP). The N-linked (GlcNAc...) asparagine glycan is linked to Asn51. LRR repeat units follow at residues 69-90 (DTQL…IFHG), 93-114 (MLRR…AFIG), and 118-139 (SLEV…AFAR). A glycan (N-linked (GlcNAc...) asparagine) is linked at Asn98. In terms of domain architecture, LRRCT spans 149 to 196 (NPWHCDCALQQALGGMAHNHERVLCRSSELRDQEGQPFMAVDADLCNL). A helical membrane pass occupies residues 204–224 (AMLVTMFGWFAMVISYVVYYV).

The protein belongs to the LRRC3 family.

Its subcellular location is the membrane. This is Leucine-rich repeat-containing protein 3B (lrrc3b) from Danio rerio (Zebrafish).